We begin with the raw amino-acid sequence, 415 residues long: Serine hydroxymethyltransferase (415 aa).

Residues Leu122 and Gly126–Leu128 each bind (6S)-5,6,7,8-tetrahydrofolate. An N6-(pyridoxal phosphate)lysine modification is found at Lys230.

The protein belongs to the SHMT family. Homodimer. It depends on pyridoxal 5'-phosphate as a cofactor.

The protein resides in the cytoplasm. It carries out the reaction (6R)-5,10-methylene-5,6,7,8-tetrahydrofolate + glycine + H2O = (6S)-5,6,7,8-tetrahydrofolate + L-serine. Its pathway is one-carbon metabolism; tetrahydrofolate interconversion. It participates in amino-acid biosynthesis; glycine biosynthesis; glycine from L-serine: step 1/1. Catalyzes the reversible interconversion of serine and glycine with tetrahydrofolate (THF) serving as the one-carbon carrier. This reaction serves as the major source of one-carbon groups required for the biosynthesis of purines, thymidylate, methionine, and other important biomolecules. Also exhibits THF-independent aldolase activity toward beta-hydroxyamino acids, producing glycine and aldehydes, via a retro-aldol mechanism. The protein is Serine hydroxymethyltransferase of Cupriavidus taiwanensis (strain DSM 17343 / BCRC 17206 / CCUG 44338 / CIP 107171 / LMG 19424 / R1) (Ralstonia taiwanensis (strain LMG 19424)).